Here is a 181-residue protein sequence, read N- to C-terminus: Protein FAM237A (181 aa).

The N-terminal stretch at 1 to 33 is a signal peptide; that stretch reads MADPGNRGGIHRPLSFTCSLLIVGMCCVSPFFC. Leu113 is modified (leucine amide). A propeptide spans 114 to 181 (removed in the mature form); it reads GRRQLVGEEE…GKVNLEIKRK (68 aa).

In terms of processing, the active form requires C-terminal amidation and disulfide bond formation. As to expression, expressed in the pituitary, testis, and heart and at lower levels in the brain.

The protein resides in the secreted. In terms of biological role, may be capable of activating GPR83 via the GNAQ signaling pathway. The sequence is that of Protein FAM237A from Homo sapiens (Human).